The sequence spans 298 residues: Rhodopsin (298 aa).

At 1-15 (IHLHWYEYPPMNPMM) the chain is on the extracellular side. A helical transmembrane segment spans residues 16 to 40 (YPLLLIFMLFTGILCLAGNFVTIWV). The Cytoplasmic portion of the chain corresponds to 41-52 (FMNTKSLRTPAN). Residues 53–75 (LLVVNLAMSDFLMMFTMFPPMMV) traverse the membrane as a helical segment. Over 76–89 (TCYYHTWTLGPTFC) the chain is Extracellular. The cysteines at positions 89 and 166 are disulfide-linked. A helical membrane pass occupies residues 90–112 (QVYAFLGNLCGCASIWTMVFITF). Positions 113-115 (DRY) match the 'Ionic lock' involved in activated form stabilization motif. Residues 113–131 (DRYNVIVKGVAGEPLSTKK) lie on the Cytoplasmic side of the membrane. A helical transmembrane segment spans residues 132 to 152 (ASLWILTIWVLSTTWCMAPFF). At 153 to 179 (GWNHYVPEGNLTGCGTDYLSEDILSRS) the chain is on the extracellular side. N-linked (GlcNAc...) asparagine glycosylation occurs at N162. The chain crosses the membrane as a helical span at residues 180 to 201 (YLYVYSTWVYFLPLAITIYCYV). Over 202-242 (FIIKAVAAHEKGMRDQAKKMGIKSLRNEEAQKTSAECRLAK) the chain is Cytoplasmic. Residues 243 to 264 (IAMTTVALWFIAWTPYLLINWV) form a helical membrane-spanning segment. The Extracellular segment spans residues 265 to 275 (GMFARSYLSPV). A helical membrane pass occupies residues 276–297 (YTIWGYVFAKANAVYNPIVYAI). Position 285 is an N6-(retinylidene)lysine (K285).

It belongs to the G-protein coupled receptor 1 family. Opsin subfamily. Homodimer. Interacts with GNAQ. Contains one covalently linked retinal chromophore.

The protein localises to the cell projection. Its subcellular location is the rhabdomere membrane. Photoreceptor required for image-forming vision at low light intensity. Can use both retinal and 3-dehydroretinal as visual pigment. Light-induced isomerization of 11-cis to all-trans retinal triggers a conformational change that activates signaling via G-proteins. Signaling via GNAQ probably mediates the activation of phospholipase C. The polypeptide is Rhodopsin (RHO) (Procambarus orcinus (Crayfish)).